The following is a 97-amino-acid chain: Large ribosomal subunit protein uL23 (97 aa).

The protein belongs to the universal ribosomal protein uL23 family. In terms of assembly, part of the 50S ribosomal subunit. Contacts protein L29, and trigger factor when it is bound to the ribosome.

In terms of biological role, one of the early assembly proteins it binds 23S rRNA. One of the proteins that surrounds the polypeptide exit tunnel on the outside of the ribosome. Forms the main docking site for trigger factor binding to the ribosome. In Brucella canis (strain ATCC 23365 / NCTC 10854 / RM-666), this protein is Large ribosomal subunit protein uL23.